The following is a 209-amino-acid chain: UPF0174 protein HP_1587 (209 aa).

This sequence belongs to the UPF0174 family.

The sequence is that of UPF0174 protein HP_1587 from Helicobacter pylori (strain ATCC 700392 / 26695) (Campylobacter pylori).